A 1274-amino-acid chain; its full sequence is Mediator of RNA polymerase II transcription subunit 14 (1274 aa).

Disordered stretches follow at residues 1 to 40, 1056 to 1142, and 1155 to 1274; these read MENG…KAHA, LVGT…LHTQ, and AQRQ…VVID. The segment covering 27–37 has biased composition (basic and acidic residues); that stretch reads AKREGSPDKGK. Residues 1075-1085 show a composition bias toward polar residues; it reads QDLQQGPQKTP. The span at 1090–1104 shows a compositional bias: low complexity; it reads AAQAAQAAQAAQAAQ. Residues 1108–1119 are compositionally biased toward pro residues; that stretch reads PQRPKQQPPTPS. 3 stretches are compositionally biased toward low complexity: residues 1120 to 1142, 1155 to 1172, and 1183 to 1252; these read QPQQ…LHTQ, AQRQ…NNNT, and PQQR…PQGQ. Positions 1253–1265 are enriched in gly residues; sequence PGHGGGANGGMGG.

It belongs to the Mediator complex subunit 14 family. Component of the Mediator complex.

The protein resides in the nucleus. In terms of biological role, component of the Mediator complex, a coactivator involved in the regulated transcription of nearly all RNA polymerase II-dependent genes. Mediator functions as a bridge to convey information from gene-specific regulatory proteins to the basal RNA polymerase II transcription machinery. Mediator is recruited to promoters by direct interactions with regulatory proteins and serves as a scaffold for the assembly of a functional preinitiation complex with RNA polymerase II and the general transcription factors. The sequence is that of Mediator of RNA polymerase II transcription subunit 14 (rgr1) from Neurospora crassa (strain ATCC 24698 / 74-OR23-1A / CBS 708.71 / DSM 1257 / FGSC 987).